Reading from the N-terminus, the 387-residue chain is Succinate--CoA ligase [ADP-forming] subunit beta (387 aa).

The region spanning 9 to 236 is the ATP-grasp domain; sequence KELFAKHNVP…RAATDPLELK (228 aa). ATP-binding positions include Lys-45, 52–54, Ser-94, and Glu-99; that span reads GRG. Mg(2+)-binding residues include Asn-191 and Asp-205. Residues Asn-256 and 318–320 contribute to the substrate site; that span reads GIT.

This sequence belongs to the succinate/malate CoA ligase beta subunit family. In terms of assembly, heterotetramer of two alpha and two beta subunits. Requires Mg(2+) as cofactor.

The enzyme catalyses succinate + ATP + CoA = succinyl-CoA + ADP + phosphate. The catalysed reaction is GTP + succinate + CoA = succinyl-CoA + GDP + phosphate. The protein operates within carbohydrate metabolism; tricarboxylic acid cycle; succinate from succinyl-CoA (ligase route): step 1/1. Its function is as follows. Succinyl-CoA synthetase functions in the citric acid cycle (TCA), coupling the hydrolysis of succinyl-CoA to the synthesis of either ATP or GTP and thus represents the only step of substrate-level phosphorylation in the TCA. The beta subunit provides nucleotide specificity of the enzyme and binds the substrate succinate, while the binding sites for coenzyme A and phosphate are found in the alpha subunit. The protein is Succinate--CoA ligase [ADP-forming] subunit beta of Mycobacterium marinum (strain ATCC BAA-535 / M).